The primary structure comprises 139 residues: Ribonuclease P protein component (139 aa).

Residues Lys-120 to Arg-139 form a disordered region.

Belongs to the RnpA family. In terms of assembly, consists of a catalytic RNA component (M1 or rnpB) and a protein subunit.

The enzyme catalyses Endonucleolytic cleavage of RNA, removing 5'-extranucleotides from tRNA precursor.. Its function is as follows. RNaseP catalyzes the removal of the 5'-leader sequence from pre-tRNA to produce the mature 5'-terminus. It can also cleave other RNA substrates such as 4.5S RNA. The protein component plays an auxiliary but essential role in vivo by binding to the 5'-leader sequence and broadening the substrate specificity of the ribozyme. This Chlamydia pneumoniae (Chlamydophila pneumoniae) protein is Ribonuclease P protein component.